Reading from the N-terminus, the 506-residue chain is Cobyric acid synthase (506 aa).

Positions 251 to 448 (DITIAIVQLP…LHGLFDSDAF (198 aa)) constitute a GATase cobBQ-type domain. The active-site Nucleophile is C332. H440 is an active-site residue.

This sequence belongs to the CobB/CobQ family. CobQ subfamily.

It functions in the pathway cofactor biosynthesis; adenosylcobalamin biosynthesis. Its function is as follows. Catalyzes amidations at positions B, D, E, and G on adenosylcobyrinic A,C-diamide. NH(2) groups are provided by glutamine, and one molecule of ATP is hydrogenolyzed for each amidation. The sequence is that of Cobyric acid synthase from Salmonella arizonae (strain ATCC BAA-731 / CDC346-86 / RSK2980).